Here is a 476-residue protein sequence, read N- to C-terminus: UDP-N-acetylmuramate--L-alanine ligase (476 aa).

Glycine 125–threonine 131 contributes to the ATP binding site.

The protein belongs to the MurCDEF family.

Its subcellular location is the cytoplasm. It catalyses the reaction UDP-N-acetyl-alpha-D-muramate + L-alanine + ATP = UDP-N-acetyl-alpha-D-muramoyl-L-alanine + ADP + phosphate + H(+). It functions in the pathway cell wall biogenesis; peptidoglycan biosynthesis. Cell wall formation. This is UDP-N-acetylmuramate--L-alanine ligase from Histophilus somni (strain 129Pt) (Haemophilus somnus).